The following is a 111-amino-acid chain: Photosystem II reaction center Psb28 protein (111 aa).

Belongs to the Psb28 family. In terms of assembly, part of the photosystem II complex.

Its subcellular location is the cellular thylakoid membrane. This chain is Photosystem II reaction center Psb28 protein, found in Nostoc sp. (strain PCC 7120 / SAG 25.82 / UTEX 2576).